The following is a 568-amino-acid chain: Protein downstream neighbor of son homolog (568 aa).

2 disordered regions span residues 28-48 (NKLA…QVDE) and 311-355 (MPLK…DDDE). Residues 315-335 (SDNSGNAHDNSFNEESTTTSL) show a composition bias toward polar residues.

Belongs to the DONSON family. As to expression, expression peaks during late G1 and S phase (at protein level).

The protein localises to the nucleus. In terms of biological role, essential for DNA amplification in the ovary and required for cell proliferation during development. This Drosophila melanogaster (Fruit fly) protein is Protein downstream neighbor of son homolog (hd).